The chain runs to 102 residues: uncharacterized protein (102 aa).

The disordered stretch occupies residues 1-43; it reads MNNAHEENISSVTGFKSTSGSPAIGSSLPGRSGEGRSSSSSSG. A compositionally biased stretch (polar residues) spans 9 to 21; the sequence is ISSVTGFKSTSGS. The span at 25–43 shows a compositional bias: low complexity; that stretch reads GSSLPGRSGEGRSSSSSSG.

This is an uncharacterized protein from Saccharomyces cerevisiae (strain ATCC 204508 / S288c) (Baker's yeast).